The primary structure comprises 196 residues: Adenylyl-sulfate kinase (196 aa).

Residue 31–38 (GLSGAGKS) coordinates ATP. The active-site Phosphoserine intermediate is the Ser105.

This sequence belongs to the APS kinase family.

The enzyme catalyses adenosine 5'-phosphosulfate + ATP = 3'-phosphoadenylyl sulfate + ADP + H(+). It functions in the pathway sulfur metabolism; hydrogen sulfide biosynthesis; sulfite from sulfate: step 2/3. Its function is as follows. Catalyzes the synthesis of activated sulfate. The sequence is that of Adenylyl-sulfate kinase (cysC) from Pseudomonas aeruginosa (strain ATCC 15692 / DSM 22644 / CIP 104116 / JCM 14847 / LMG 12228 / 1C / PRS 101 / PAO1).